A 32-amino-acid polypeptide reads, in one-letter code: Parigidin-br1 (32 aa).

The cyclopeptide (Gly-Asp) cross-link spans Gly-1 to Asp-32. Disulfide bonds link Cys-6-Cys-22, Cys-10-Cys-24, and Cys-15-Cys-29.

This is a cyclic peptide. In terms of tissue distribution, expressed in leaves, flowers, peduncles and seeds (at protein level).

Functionally, probably participates in a plant defense mechanism. Reduces growth of and increases mortality in larvae of D.saccharalis. Kills cultured SF-9 cells of S.frugiperda probably by disrupting plasma membranes. Has hemolytic activity against human erythrocytes. Has no antibacterial activity against E.coli strain ATCC 8739 and S.aureus strain ATCC 25923. This chain is Parigidin-br1, found in Palicourea rigida.